A 1020-amino-acid polypeptide reads, in one-letter code: Inner tegument protein (1020 aa).

The segment at 539-1020 (WGVRIPDRDT…EIDAIFNNTK (482 aa)) is interaction with large tegument protein.

Belongs to the herpesviridae inner tegument protein family. In terms of assembly, interacts (via C-terminus) with the large tegument protein/LTP (via N-terminus).

It is found in the virion tegument. Its subcellular location is the host cytoplasm. The protein resides in the host nucleus. It localises to the host Golgi apparatus. The protein localises to the host trans-Golgi network. Functionally, plays an essential role in cytoplasmic secondary envelopment during viral egress. Interacts with the capsid via the large tegument protein/LTP and participates in its transport to the host trans-Golgi network (TGN) where secondary envelopment occurs. Modulates tegumentation and capsid accumulation at the viral assembly complex. This Equine herpesvirus 1 (strain Ab4p) (EHV-1) protein is Inner tegument protein.